Here is a 141-residue protein sequence, read N- to C-terminus: Nucleoside diphosphate kinase (141 aa).

Residues Lys-11, Phe-59, Arg-87, Thr-93, Arg-104, and Asn-114 each contribute to the ATP site. The Pros-phosphohistidine intermediate role is filled by His-117.

The protein belongs to the NDK family. Homotetramer. It depends on Mg(2+) as a cofactor.

It is found in the cytoplasm. It catalyses the reaction a 2'-deoxyribonucleoside 5'-diphosphate + ATP = a 2'-deoxyribonucleoside 5'-triphosphate + ADP. It carries out the reaction a ribonucleoside 5'-diphosphate + ATP = a ribonucleoside 5'-triphosphate + ADP. In terms of biological role, major role in the synthesis of nucleoside triphosphates other than ATP. The ATP gamma phosphate is transferred to the NDP beta phosphate via a ping-pong mechanism, using a phosphorylated active-site intermediate. The sequence is that of Nucleoside diphosphate kinase from Pseudomonas syringae pv. tomato (strain ATCC BAA-871 / DC3000).